Consider the following 430-residue polypeptide: Phosphomethylpyrimidine synthase (430 aa).

Substrate is bound by residues asparagine 67, methionine 96, tyrosine 125, histidine 161, 183–185, 224–227, and glutamate 263; these read SRG and DALR. Histidine 267 lines the Zn(2+) pocket. Residue tyrosine 290 coordinates substrate. Position 331 (histidine 331) interacts with Zn(2+). Positions 406, 409, and 413 each coordinate [4Fe-4S] cluster.

The protein belongs to the ThiC family. In terms of assembly, homodimer. The cofactor is [4Fe-4S] cluster.

It carries out the reaction 5-amino-1-(5-phospho-beta-D-ribosyl)imidazole + S-adenosyl-L-methionine = 4-amino-2-methyl-5-(phosphooxymethyl)pyrimidine + CO + 5'-deoxyadenosine + formate + L-methionine + 3 H(+). It participates in cofactor biosynthesis; thiamine diphosphate biosynthesis. Catalyzes the synthesis of the hydroxymethylpyrimidine phosphate (HMP-P) moiety of thiamine from aminoimidazole ribotide (AIR) in a radical S-adenosyl-L-methionine (SAM)-dependent reaction. This Campylobacter jejuni subsp. doylei (strain ATCC BAA-1458 / RM4099 / 269.97) protein is Phosphomethylpyrimidine synthase.